A 611-amino-acid polypeptide reads, in one-letter code: Protein KINASE OF THE OUTER CHLOROPLAST MEMBRANE 1 (611 aa).

Topologically, residues 1–555 (MASKIIAGKP…LEDFHWAVRP (555 aa)) are cytoplasmic. One can recognise a Protein kinase domain in the interval 39–306 (LKLRHRIGRG…TDILLVLKSL (268 aa)). Residues 45–53 (IGRGPFGDV) and Lys74 each bind ATP. A helical membrane pass occupies residues 556–572 (LLIAMGLLTAMKLGICV). The Chloroplast intermembrane portion of the chain corresponds to 573–611 (RKKIGRSKDGKQRDGSTGQGDCKIPDGKGSDKSKWLVFF). The interval 579–606 (SKDGKQRDGSTGQGDCKIPDGKGSDKSK) is disordered. A compositionally biased stretch (basic and acidic residues) spans 595–606 (KIPDGKGSDKSK).

The protein belongs to the protein kinase superfamily. Ser/Thr protein kinase family. Associates with the TOC complex containing, at least, translocons at the chloroplast envelope (e.g. TOCs and TICs such as TOC159, TOC75, TOC33 and TIC56).

The protein resides in the plastid. The protein localises to the chloroplast outer membrane. It catalyses the reaction L-seryl-[protein] + ATP = O-phospho-L-seryl-[protein] + ADP + H(+). The enzyme catalyses L-threonyl-[protein] + ATP = O-phospho-L-threonyl-[protein] + ADP + H(+). Functionally, serine/threonine protein kinase acting as a regulatory component of the plastid protein import machinery by phosphorylating import receptors (e.g. the A-domain of TOC159, TOC120 and TOC132). Supports preprotein import and contributes to efficient chloroplast biogenesis, thus being required for survival during de-etiolation. This is Protein KINASE OF THE OUTER CHLOROPLAST MEMBRANE 1 from Arabidopsis thaliana (Mouse-ear cress).